The sequence spans 199 residues: DnaJ homolog subfamily C member 5B (199 aa).

Phosphoserine occurs at positions 14 and 16. The J domain maps to serine 19–glycine 84.

In terms of assembly, interacts with the chaperone complex consisting of HSC70 and SGTA. In terms of processing, palmitoylated.

It localises to the membrane. The protein is DnaJ homolog subfamily C member 5B (Dnajc5b) of Mus musculus (Mouse).